The chain runs to 63 residues: Large ribosomal subunit protein uL29 (63 aa).

The protein belongs to the universal ribosomal protein uL29 family.

This Actinobacillus pleuropneumoniae serotype 5b (strain L20) protein is Large ribosomal subunit protein uL29.